Here is a 146-residue protein sequence, read N- to C-terminus: Large ribosomal subunit protein uL15 (146 aa).

Residues Met-1–Gln-54 are disordered. 2 stretches are compositionally biased toward gly residues: residues Arg-21–Ala-31 and Ser-42–Gly-52.

Belongs to the universal ribosomal protein uL15 family. Part of the 50S ribosomal subunit.

Functionally, binds to the 23S rRNA. This Clostridium botulinum (strain Eklund 17B / Type B) protein is Large ribosomal subunit protein uL15.